A 249-amino-acid polypeptide reads, in one-letter code: MFLSAALRARAAGLAAHWGKHIRNLHKTAVQNGAGGALFVHRDTPENNPETPFDFTPENYKRIEAIVKNYPEGHKAAAVLPVLDLAQRQNGWLPISAMNKVAEILQVPPMRVYEVATFYTMYNRKPVGKYHIQVCTTTPCMLRNSDSILEAIQKKLGIKVGETTPDKLFTLIEVECLGACVNAPMVQINDNYYEDLTPKDIEEIIDELKAGKIPKPGPRSGRFSCEPAGGLTSLTEPPKGPGFGVQAGL.

Residues Met1–Asn32 constitute a mitochondrion transit peptide. At Lys61 the chain carries N6-acetyllysine. [2Fe-2S] cluster contacts are provided by Cys135, Cys140, Cys176, and Cys180. Position 193 is a phosphotyrosine; by SRC (Tyr193). The interval Ile213–Leu249 is disordered.

Belongs to the complex I 24 kDa subunit family. In terms of assembly, core subunit of respiratory chain NADH dehydrogenase (Complex I) which is composed of 45 different subunits. This is a component of the flavoprotein-sulfur (FP) fragment of the enzyme. Requires [2Fe-2S] cluster as cofactor.

The protein localises to the mitochondrion inner membrane. The catalysed reaction is a ubiquinone + NADH + 5 H(+)(in) = a ubiquinol + NAD(+) + 4 H(+)(out). Core subunit of the mitochondrial membrane respiratory chain NADH dehydrogenase (Complex I) which catalyzes electron transfer from NADH through the respiratory chain, using ubiquinone as an electron acceptor. Parts of the peripheral arm of the enzyme, where the electrons from NADH are accepted by flavin mononucleotide (FMN) and then passed along a chain of iron-sulfur clusters by electron tunnelling to the final acceptor ubiquinone. Contains one iron-sulfur cluster. The protein is NADH dehydrogenase [ubiquinone] flavoprotein 2, mitochondrial (NDUFV2) of Bos taurus (Bovine).